Reading from the N-terminus, the 373-residue chain is 4-hydroxy-3-methylbut-2-en-1-yl diphosphate synthase (flavodoxin) (373 aa).

The [4Fe-4S] cluster site is built by Cys270, Cys273, Cys305, and Glu312.

It belongs to the IspG family. [4Fe-4S] cluster is required as a cofactor.

It catalyses the reaction (2E)-4-hydroxy-3-methylbut-2-enyl diphosphate + oxidized [flavodoxin] + H2O + 2 H(+) = 2-C-methyl-D-erythritol 2,4-cyclic diphosphate + reduced [flavodoxin]. Its pathway is isoprenoid biosynthesis; isopentenyl diphosphate biosynthesis via DXP pathway; isopentenyl diphosphate from 1-deoxy-D-xylulose 5-phosphate: step 5/6. In terms of biological role, converts 2C-methyl-D-erythritol 2,4-cyclodiphosphate (ME-2,4cPP) into 1-hydroxy-2-methyl-2-(E)-butenyl 4-diphosphate. In Photobacterium profundum (strain SS9), this protein is 4-hydroxy-3-methylbut-2-en-1-yl diphosphate synthase (flavodoxin).